A 430-amino-acid chain; its full sequence is Glutamine synthetase, chloroplastic/mitochondrial (430 aa).

The N-terminal 45 residues, 1–45 (MAQILAASPTCQMRVPKHSSVIASSSKLWSSVVLKQKKQSNNKVR), are a transit peptide targeting the chloroplast and mitochondrion. Positions 77-157 (IIAEYIWIGG…VICDTWTPAG (81 aa)) constitute a GS beta-grasp domain. Residues 97 to 122 (TIEKPVEDPSELPKWNYDGSSTGQAP) are disordered. Ser-106 bears the Phosphoserine mark. The 270-residue stretch at 161 to 430 (PTNKRAKAAE…LAAQKLSLNV (270 aa)) folds into the GS catalytic domain.

This sequence belongs to the glutamine synthetase family. Homooctamer. As to expression, expressed in mesophyll and epidermal cells of leaves.

The protein resides in the plastid. The protein localises to the chloroplast. Its subcellular location is the mitochondrion. It catalyses the reaction L-glutamate + NH4(+) + ATP = L-glutamine + ADP + phosphate + H(+). The light-modulated chloroplast/mitochondrial enzyme, encoded by a nuclear gene and expressed primarily in leaves, is responsible for the reassimilation of the ammonia generated by photorespiration. This is Glutamine synthetase, chloroplastic/mitochondrial (GLN2) from Arabidopsis thaliana (Mouse-ear cress).